Reading from the N-terminus, the 714-residue chain is Fatty acid oxidation complex subunit alpha (714 aa).

The segment at 1-190 is enoyl-CoA hydratase; the sequence is MDTVSAFKLE…KAGLVDEVVP (190 aa). Residues 306–714 are 3-hydroxyacyl-CoA dehydrogenase; sequence GPLTSIAVLG…TFWPADERLT (409 aa).

It in the N-terminal section; belongs to the enoyl-CoA hydratase/isomerase family. In the central section; belongs to the 3-hydroxyacyl-CoA dehydrogenase family. In terms of assembly, heterotetramer of two alpha chains (FadJ) and two beta chains (FadI).

It localises to the cytoplasm. It carries out the reaction a (3S)-3-hydroxyacyl-CoA = a (2E)-enoyl-CoA + H2O. The catalysed reaction is a 4-saturated-(3S)-3-hydroxyacyl-CoA = a (3E)-enoyl-CoA + H2O. It catalyses the reaction a (3S)-3-hydroxyacyl-CoA + NAD(+) = a 3-oxoacyl-CoA + NADH + H(+). The enzyme catalyses (3S)-3-hydroxybutanoyl-CoA = (3R)-3-hydroxybutanoyl-CoA. It functions in the pathway lipid metabolism; fatty acid beta-oxidation. Catalyzes the formation of a hydroxyacyl-CoA by addition of water on enoyl-CoA. Also exhibits 3-hydroxyacyl-CoA epimerase and 3-hydroxyacyl-CoA dehydrogenase activities. The protein is Fatty acid oxidation complex subunit alpha of Klebsiella pneumoniae (strain 342).